A 153-amino-acid chain; its full sequence is Nucleoside diphosphate kinase (153 aa).

Residues K11, F59, R87, T93, R104, and N114 each contribute to the ATP site. The Pros-phosphohistidine intermediate role is filled by H117.

The protein belongs to the NDK family. The cofactor is Mg(2+).

It carries out the reaction a 2'-deoxyribonucleoside 5'-diphosphate + ATP = a 2'-deoxyribonucleoside 5'-triphosphate + ADP. The catalysed reaction is a ribonucleoside 5'-diphosphate + ATP = a ribonucleoside 5'-triphosphate + ADP. Functionally, major role in the synthesis of nucleoside triphosphates other than ATP. The ATP gamma phosphate is transferred to the NDP beta phosphate via a ping-pong mechanism, using a phosphorylated active-site intermediate. The polypeptide is Nucleoside diphosphate kinase (swoH) (Emericella nidulans (strain FGSC A4 / ATCC 38163 / CBS 112.46 / NRRL 194 / M139) (Aspergillus nidulans)).